We begin with the raw amino-acid sequence, 422 residues long: Probable alpha-1,6-mannosyltransferase MNN11 (422 aa).

The Cytoplasmic segment spans residues 1 to 31; that stretch reads MAIKPRTKGKTYSSRSVGSQWFNRLGFKQNK. The chain crosses the membrane as a helical; Signal-anchor for type II membrane protein span at residues 32 to 52; that stretch reads YGTCKFLSIITAFVFILYFFS. The Lumenal portion of the chain corresponds to 53 to 422; the sequence is NRFYPISRSA…GHMYQKIKKS (370 aa).

This sequence belongs to the glycosyltransferase 34 family. As to quaternary structure, component of the M-Pol II complex composed of ANP1, MNN9, MNN10, MNN11 and HOC1.

The protein resides in the golgi apparatus. The protein localises to the cis-Golgi network membrane. Its function is as follows. Required for synthesis of full-length mannan chains. In terms of biological role, the M-Pol II complex possesses alpha-1,6-mannosyltransferase activity and is probably involved in the elongation of the mannan backbone of N-linked glycans on cell wall and periplasmic proteins. The chain is Probable alpha-1,6-mannosyltransferase MNN11 (MNN11) from Saccharomyces cerevisiae (strain ATCC 204508 / S288c) (Baker's yeast).